The chain runs to 245 residues: Uridylate kinase (245 aa).

An ATP-binding site is contributed by 16–19 (KLSG). Residues 24–29 (GDNGFG) are involved in allosteric activation by GTP. UMP is bound at residue Gly-59. Gly-60 and Arg-64 together coordinate ATP. Residues Asp-78 and 139 to 146 (NGAPFFTT) each bind UMP. ATP is bound by residues Asn-167, Tyr-173, and Asp-176.

This sequence belongs to the UMP kinase family. Homohexamer.

The protein resides in the cytoplasm. The catalysed reaction is UMP + ATP = UDP + ADP. Its pathway is pyrimidine metabolism; CTP biosynthesis via de novo pathway; UDP from UMP (UMPK route): step 1/1. With respect to regulation, allosterically activated by GTP. Inhibited by UTP. Its function is as follows. Catalyzes the reversible phosphorylation of UMP to UDP. The protein is Uridylate kinase of Deinococcus radiodurans (strain ATCC 13939 / DSM 20539 / JCM 16871 / CCUG 27074 / LMG 4051 / NBRC 15346 / NCIMB 9279 / VKM B-1422 / R1).